Here is a 351-residue protein sequence, read N- to C-terminus: Beta-hexosaminidase (351 aa).

Substrate-binding positions include Asp-62, Arg-70, Arg-133, and 163–164 (KH). His-176 acts as the Proton donor/acceptor in catalysis. Asp-248 acts as the Nucleophile in catalysis.

Belongs to the glycosyl hydrolase 3 family. NagZ subfamily. As to quaternary structure, monomer.

The protein resides in the cytoplasm. The catalysed reaction is Hydrolysis of terminal non-reducing N-acetyl-D-hexosamine residues in N-acetyl-beta-D-hexosaminides.. It functions in the pathway cell wall biogenesis; peptidoglycan recycling. Functionally, plays a role in peptidoglycan recycling by cleaving the terminal beta-1,4-linked N-acetylglucosamine (GlcNAc) from peptide-linked peptidoglycan fragments, giving rise to free GlcNAc, anhydro-N-acetylmuramic acid and anhydro-N-acetylmuramic acid-linked peptides. In Haemophilus influenzae (strain ATCC 51907 / DSM 11121 / KW20 / Rd), this protein is Beta-hexosaminidase.